Here is a 187-residue protein sequence, read N- to C-terminus: Adenine phosphoribosyltransferase (187 aa).

This sequence belongs to the purine/pyrimidine phosphoribosyltransferase family. In terms of assembly, homodimer.

It is found in the cytoplasm. The catalysed reaction is AMP + diphosphate = 5-phospho-alpha-D-ribose 1-diphosphate + adenine. Its pathway is purine metabolism; AMP biosynthesis via salvage pathway; AMP from adenine: step 1/1. Functionally, catalyzes a salvage reaction resulting in the formation of AMP, that is energically less costly than de novo synthesis. The sequence is that of Adenine phosphoribosyltransferase from Yersinia pestis (strain Pestoides F).